Here is a 477-residue protein sequence, read N- to C-terminus: Stromelysin-3 (477 aa).

An N-terminal signal peptide occupies residues M1–S17. Residues A18–R85 constitute a propeptide, activation peptide. The disordered stretch occupies residues R64 to Q83. Zn(2+) is bound by residues C65, H152, and D154. Ca(2+)-binding residues include D159, G160, G162, and I164. 3 residues coordinate Zn(2+): H167, H180, and H203. E204 is a catalytic residue. Residues H207 and H213 each contribute to the Zn(2+) site. A disulfide bridge connects residues C279 and C466. 4 Hemopexin repeats span residues K280–I324, P325–V369, T370–V418, and P419–C466.

The protein belongs to the peptidase M10A family. Requires Ca(2+) as cofactor. Zn(2+) is required as a cofactor. As to expression, expressed in fibroblast cells that are activated by thyroid hormone. High levels in resorbing tail.

It localises to the secreted. Its subcellular location is the extracellular space. The protein localises to the extracellular matrix. In terms of biological role, may be involved in the modification of the extracellular matrix during metamorphic apoptosis. The protein is Stromelysin-3 (mmp11) of Xenopus laevis (African clawed frog).